The primary structure comprises 298 residues: Oxygen-dependent coproporphyrinogen-III oxidase (298 aa).

A substrate-binding site is contributed by Ser-90. A divalent metal cation-binding residues include His-94 and His-104. The active-site Proton donor is His-104. Residue 106 to 108 (NVR) coordinates substrate. A divalent metal cation contacts are provided by His-143 and His-173. Residues 238-273 (YVEFNLVWDRGTLFGLQSGGRTESILMSLPPIVKWR) form an important for dimerization region. 256-258 (GGR) is a substrate binding site.

Belongs to the aerobic coproporphyrinogen-III oxidase family. In terms of assembly, homodimer. A divalent metal cation is required as a cofactor.

It localises to the cytoplasm. It carries out the reaction coproporphyrinogen III + O2 + 2 H(+) = protoporphyrinogen IX + 2 CO2 + 2 H2O. It participates in porphyrin-containing compound metabolism; protoporphyrin-IX biosynthesis; protoporphyrinogen-IX from coproporphyrinogen-III (O2 route): step 1/1. Involved in the heme biosynthesis. Catalyzes the aerobic oxidative decarboxylation of propionate groups of rings A and B of coproporphyrinogen-III to yield the vinyl groups in protoporphyrinogen-IX. This chain is Oxygen-dependent coproporphyrinogen-III oxidase, found in Dechloromonas aromatica (strain RCB).